The following is an 81-amino-acid chain: Defensin-like protein 311 (81 aa).

An N-terminal signal peptide occupies residues 1 to 24 (MEKISAFFVILFLVSSCLVTMSVG). 3 disulfide bridges follow: cysteine 27–cysteine 50, cysteine 33–cysteine 57, and cysteine 41–cysteine 59.

It belongs to the DEFL family.

Its subcellular location is the secreted. The polypeptide is Defensin-like protein 311 (Arabidopsis thaliana (Mouse-ear cress)).